Here is a 123-residue protein sequence, read N- to C-terminus: Small ribosomal subunit protein uS12 (123 aa).

D89 carries the 3-methylthioaspartic acid modification.

It belongs to the universal ribosomal protein uS12 family. In terms of assembly, part of the 30S ribosomal subunit. Contacts proteins S8 and S17. May interact with IF1 in the 30S initiation complex.

Its function is as follows. With S4 and S5 plays an important role in translational accuracy. In terms of biological role, interacts with and stabilizes bases of the 16S rRNA that are involved in tRNA selection in the A site and with the mRNA backbone. Located at the interface of the 30S and 50S subunits, it traverses the body of the 30S subunit contacting proteins on the other side and probably holding the rRNA structure together. The combined cluster of proteins S8, S12 and S17 appears to hold together the shoulder and platform of the 30S subunit. The sequence is that of Small ribosomal subunit protein uS12 from Bartonella bacilliformis (strain ATCC 35685 / KC583 / Herrer 020/F12,63).